A 269-amino-acid chain; its full sequence is MVKLLSIGGSDASGGAGIEADLKTFQEYGAFGVATLTAIVTMDPSRNWSHRVHSLEEDCVRDQLETAFAGVGVSAVKSGMLASVHAIECVAEYLERFAVAAYVFDPVMVCKGSGDALHRELNELMIQKLLPRATVVTPNLFETAQIAGISVPRTVDEMKEGARLIHERGASHVFVKGGGRLPGCKHALDVFYDGKTFHLVEDELVQSGWNHGAGCTVSAAITAGLGRGLTAYDAILSAKRFVTTGLRHGFQVNQWVGTGNLSKWRDRFH.

Asn-139 provides a ligand contact to ATP. Residue Glu-142 coordinates Mg(2+). Residues 176-180 (KGGGR), Asp-189, Val-205, Gly-214, and Lys-239 each bind ATP.

It belongs to the ThiD family.

The catalysed reaction is pyridoxal + ATP = pyridoxal 5'-phosphate + ADP + H(+). Its function is as follows. Phosphorylates B6 vitamers; functions in a salvage pathway. Uses pyridoxal, pyridoxine, and pyridoxamine as substrates. This chain is Putative pyridoxine kinase (pdxK), found in Treponema pallidum (strain Nichols).